Consider the following 83-residue polypeptide: Conotoxin p21a (83 aa).

2 positions are modified to 4-hydroxyproline; partial: Pro-24 and Pro-43. The residue at position 83 (His-83) is a Histidine amide.

May form a non-covalent dimer. Post-translationally, contains 5 disulfide bonds. Expressed by the venom duct.

It is found in the secreted. This chain is Conotoxin p21a, found in Conus purpurascens (Purple cone).